Reading from the N-terminus, the 639-residue chain is Ubiquitin-like modifier-activating enzyme ATG7 (639 aa).

The GXGXXG motif signature appears at 322–327; sequence GAGTLG. The active-site Glycyl thioester intermediate is C502.

The protein belongs to the ATG7 family. In terms of assembly, homodimer.

It is found in the cytoplasm. The protein localises to the preautophagosomal structure. Functionally, E1-like activating enzyme involved in the 2 ubiquitin-like systems required for cytoplasm to vacuole transport (Cvt) and autophagy. Activates ATG12 for its conjugation with ATG5 and ATG8 for its conjugation with phosphatidylethanolamine. Both systems are needed for the ATG8 association to Cvt vesicles and autophagosomes membranes. Autophagy is essential for maintenance of amino acid levels and protein synthesis under nitrogen starvation. Required for selective autophagic degradation of the nucleus (nucleophagy) as well as for mitophagy which contributes to regulate mitochondrial quantity and quality by eliminating the mitochondria to a basal level to fulfill cellular energy requirements and preventing excess ROS production. Plays a role in the regulation of filamentous growth and chronological longevity. The chain is Ubiquitin-like modifier-activating enzyme ATG7 (APG7) from Candida albicans (strain SC5314 / ATCC MYA-2876) (Yeast).